Here is a 44-residue protein sequence, read N- to C-terminus: Photosystem I reaction center subunit IX (44 aa).

Residues 9 to 29 traverse the membrane as a helical segment; it reads YMRSAPVVAAAWITMTAGIII.

It belongs to the PsaJ family.

It localises to the cellular thylakoid membrane. Its function is as follows. May help in the organization of the PsaE and PsaF subunits. This is Photosystem I reaction center subunit IX from Prochlorococcus marinus (strain MIT 9312).